A 546-amino-acid chain; its full sequence is Nuclear pore complex protein Nup58 (546 aa).

17 consecutive repeat copies span residues 22 to 23, 36 to 37, 45 to 46, 64 to 65, 73 to 74, 82 to 83, 92 to 93, 101 to 102, 110 to 111, 119 to 120, 128 to 129, 137 to 138, 146 to 147, 155 to 156, 166 to 167, 197 to 198, and 199 to 200. The tract at residues 22–200 is 17 X 2 AA repeats of F-G; the sequence is FGARPATTTA…TTAPPAFGFG (179 aa).

Belongs to the NUP58 family. Component of the nuclear pore complex. Interacts with Nup54. Interacts (via C-terminus) with fs(1)Yb; this interaction occurs in a RNA-independent manner. Interacts with sbr/nxf1. Interacts with Nxt1. In terms of processing, O-glycosylated; contains O-GlcNAc. O-GlcNAcylation increases with increasing ambient temperature.

It localises to the nucleus. Its subcellular location is the nuclear pore complex. Functionally, component of the nuclear pore complex, a complex required for the trafficking across the nuclear membrane. Together with Nup54, required for transposable element silencing regulation in ovarian follicle cells. By interacting with the nuclear (Nxf1/Nxt1) and cytosolic (fs(1)Yb) components of the flamenco (flam) transcripts processing pathway, enables export and subsequent piRNA production. This Drosophila melanogaster (Fruit fly) protein is Nuclear pore complex protein Nup58.